The chain runs to 240 residues: Lysoplasmalogenase TMEM86A (240 aa).

Topologically, residues 1-21 (MVSPVTVVKSEGPKLVPFFKA) are cytoplasmic. The chain crosses the membrane as a helical span at residues 22 to 42 (TCVYFVLWLPSSSPSWVSALI). Lys43 is a topological domain (extracellular). Residues 44-64 (CLPIFCLWLFLLAHGLGFLLT) form a helical membrane-spanning segment. The Cytoplasmic segment spans residues 65–70 (HPSATR). Residues 71–91 (IFVGLVFSAIGDAFLIWQDQG) form a helical membrane-spanning segment. Tyr92 is a topological domain (extracellular). The chain crosses the membrane as a helical span at residues 93–113 (FVHGMLMFAVTHMLYASAFGM). Residues 114–115 (RP) are Cytoplasmic-facing. Residues 116–136 (LGLRTGLLMVILSGLCYAFLY) form a helical membrane-spanning segment. At 137-138 (PN) the chain is on the extracellular side. A helical transmembrane segment spans residues 139–159 (LTGAFTYVVGVYVAIIGFMGW). Topologically, residues 160 to 174 (RAMAGLQLVGAAWRW) are cytoplasmic. The chain crosses the membrane as a helical span at residues 175–195 (TELAAGTGALLFIVSDLTIAL). The Extracellular portion of the chain corresponds to 196-206 (DKFCFPVPYSR). A helical membrane pass occupies residues 207-227 (ALIMSTYYAAQMLIALSAVES). Residues 228–240 (REPVEDYRLSKAK) are Cytoplasmic-facing.

Belongs to the TMEM86 family.

The protein resides in the endoplasmic reticulum membrane. The enzyme catalyses a 1-O-(1Z-alkenyl)-sn-glycero-3-phosphocholine + H2O = a 2,3-saturated aldehyde + sn-glycerol 3-phosphocholine. The catalysed reaction is a 1-O-(1Z-alkenyl)-sn-glycero-3-phosphoethanolamine + H2O = a 2,3-saturated aldehyde + sn-glycero-3-phosphoethanolamine. In terms of biological role, catalyzes the hydrolysis of the vinyl ether bond of choline or ethanolamine lysoplasmalogens, forming fatty aldehyde and glycerophosphocholine or glycerophosphoethanolamine, respectively and is specific for the sn-2-deacylated (lyso) form of plasmalogen. Plays an important role in lysoplasmalogen metabolism in the adipocyte tissue and macrophages. In Bos taurus (Bovine), this protein is Lysoplasmalogenase TMEM86A (TMEM86A).